We begin with the raw amino-acid sequence, 620 residues long: Glutathione-regulated potassium-efflux system protein KefC (620 aa).

Helical transmembrane passes span His4–Val24, Leu26–Leu46, Ser54–Leu74, Gly90–Leu110, Val114–Met134, Phe149–Leu169, Met178–Leu198, Val218–Gly238, Gly270–Leu290, Leu294–Ile314, Trp327–Gln347, and Ser359–Asn379. An RCK N-terminal domain is found at Gln399–Thr518. The segment at Gly597–Ser620 is disordered.

The protein belongs to the monovalent cation:proton antiporter 2 (CPA2) transporter (TC 2.A.37) family. KefC subfamily. As to quaternary structure, homodimer. Interacts with the regulatory subunit KefF.

The protein resides in the cell inner membrane. Functionally, pore-forming subunit of a potassium efflux system that confers protection against electrophiles. Catalyzes K(+)/H(+) antiport. The sequence is that of Glutathione-regulated potassium-efflux system protein KefC from Escherichia coli (strain K12 / MC4100 / BW2952).